The following is a 408-amino-acid chain: Formate-dependent phosphoribosylglycinamide formyltransferase (408 aa).

Residues 25 to 26 (EL) and Glu-85 contribute to the N(1)-(5-phospho-beta-D-ribosyl)glycinamide site. Residues Arg-118, Lys-159, 164-169 (SSGKGQ), 199-202 (EAFV), and Glu-207 each bind ATP. The region spanning 123–318 (KLAAEELGLP…EFELHAKAIL (196 aa)) is the ATP-grasp domain. The Mg(2+) site is built by Glu-277 and Glu-289. N(1)-(5-phospho-beta-D-ribosyl)glycinamide-binding positions include Asp-296, Lys-365, and 372–373 (RR).

It belongs to the PurK/PurT family. As to quaternary structure, homodimer.

The enzyme catalyses N(1)-(5-phospho-beta-D-ribosyl)glycinamide + formate + ATP = N(2)-formyl-N(1)-(5-phospho-beta-D-ribosyl)glycinamide + ADP + phosphate + H(+). It functions in the pathway purine metabolism; IMP biosynthesis via de novo pathway; N(2)-formyl-N(1)-(5-phospho-D-ribosyl)glycinamide from N(1)-(5-phospho-D-ribosyl)glycinamide (formate route): step 1/1. Functionally, involved in the de novo purine biosynthesis. Catalyzes the transfer of formate to 5-phospho-ribosyl-glycinamide (GAR), producing 5-phospho-ribosyl-N-formylglycinamide (FGAR). Formate is provided by PurU via hydrolysis of 10-formyl-tetrahydrofolate. The polypeptide is Formate-dependent phosphoribosylglycinamide formyltransferase (Corynebacterium glutamicum (strain R)).